The following is a 405-amino-acid chain: Potassium channel subfamily K member 18 (405 aa).

A helical membrane pass occupies residues 43 to 63 (LPGLCFLCCLVTYALVGAALF). Residue Asn94 is glycosylated (N-linked (GlcNAc...) asparagine). The pore-forming intramembrane region spans 125–151 (FLSALFFCCTVFSTVGYGHMYPVTRLG). Residues Thr138, Val139, Gly140, and Tyr141 each coordinate K(+). The interval 138–143 (TVGYGH) is selectivity filter 1. Residues 153–173 (FLCMLYALFGIPLMFLVLTDI) form a helical membrane-spanning segment. The tract at residues 221–226 (PQIVID) is interaction with calcineurin. The interval 272 to 277 (RSNSCP) is interaction with YWHAH. A phosphoserine mark is found at Ser275 and Ser287. A helical transmembrane segment spans residues 304–324 (IPLPVIALVIFAYISCAAAIL). An intramembrane region (pore-forming) is located at residues 337–351 (FYFCFVTLTTIGFGD). Residues 346–351 (TIGFGD) form a selectivity filter 2 region. A helical membrane pass occupies residues 358–378 (HFFLFFSIYIIVGMEILFIAF).

It belongs to the two pore domain potassium channel (TC 1.A.1.8) family. As to quaternary structure, homodimer. Heterodimer with KCNK2. Heterodimer with KCNK10. Interacts with calcineurin. Interacts with YWHAH, in a phosphorylation-dependent manner. Post-translationally, phosphorylation of Ser-275 is required for the binding of 14-3-3eta/YWHAH. Calcineurin-mediated dephosphorylation of Ser-287 enhances channel activity. In terms of processing, N-glycosylated.

Its subcellular location is the cell membrane. It carries out the reaction K(+)(in) = K(+)(out). Its activity is regulated as follows. Activated by volatile anesthetics, such as isoflurane and inhibited by local anesthetics such as bupivacaine and lidocaine. Inhibited by extracellular acidic pH. Inhibited by Zn(2+) ions. Functionally, k(+) channel that conducts outward and inward rectifying currents at depolarized and hyperpolarized membrane potentials, respectively. The outward rectifying currents are voltage-dependent, coupled to K(+) electrochemical gradient across the membrane, whereas the inward currents can be induced in response to activation of Ca(2+)-mobilizing receptors. Homo- and heterodimerizes to form functional channels with distinct regulatory and gating properties. In trigeminal ganglia sensory neurons, the heterodimers of KCNK18/TRESK and KCNK2/TREK-1 or KCNK10/TREK-2 inhibit neuronal firing and neurogenic inflammation by stabilizing the resting membrane potential at K(+) equilibrium potential as well as by regulating the threshold of action potentials and the spike frequency. In thymocytes, conducts K(+) currents upon T cell receptor (TCR) signaling leading to sustained Ca(2+) influx and NF-kappa-B activation, FOXP3 transcription and positive selection of regulatory T cell (Treg) progenitor subsets. Appears to mediate the analgesics effects of hydroxy-alpha-sanshool, a metabolite naturally present in Schezuan pepper and other Xanthoxylum plants. The chain is Potassium channel subfamily K member 18 (Kcnk18) from Rattus norvegicus (Rat).